The chain runs to 616 residues: Xaa-Pro aminopeptidase app-1 (616 aa).

The a peptide site is built by Arg-78 and His-392. Positions 413, 424, and 487 each coordinate Zn(2+). His-487, His-496, and Glu-522 together coordinate a peptide. Zn(2+)-binding residues include Glu-522 and Glu-536.

Belongs to the peptidase M24B family. In terms of assembly, homodimer. May interact with pid-2, pid-4 and pid-5. Zn(2+) is required as a cofactor. As to expression, specifically expressed in the intestine.

The protein resides in the cytoplasm. The enzyme catalyses Release of any N-terminal amino acid, including proline, that is linked to proline, even from a dipeptide or tripeptide.. With respect to regulation, strongly inhibited by the metal ion chelators EDTA and 1,10-phenanthroline. Also inhibited by apstatin. Activity towards bradykinin is inhibited by Mn(2+) and Zn(2+) at all concentrations tested, whereas Co(2+) is inhibitory at concentrations above 100 uM and activatory at 10 uM. Catalyzes the removal of a penultimate prolyl residue from the N-termini of peptides, such as Arg-Pro-Pro. Has activity towards the flp-9 neuropeptide KPSFVRF-amide. The protein is Xaa-Pro aminopeptidase app-1 of Caenorhabditis elegans.